A 383-amino-acid polypeptide reads, in one-letter code: Protein RecA (383 aa).

79 to 86 (GPESSGKT) contacts ATP.

Belongs to the RecA family.

The protein resides in the cytoplasm. Functionally, can catalyze the hydrolysis of ATP in the presence of single-stranded DNA, the ATP-dependent uptake of single-stranded DNA by duplex DNA, and the ATP-dependent hybridization of homologous single-stranded DNAs. It interacts with LexA causing its activation and leading to its autocatalytic cleavage. This is Protein RecA from Streptococcus gordonii (strain Challis / ATCC 35105 / BCRC 15272 / CH1 / DL1 / V288).